A 388-amino-acid chain; its full sequence is Beta-hexosaminidase LpqI (388 aa).

Residues 1 to 19 (MAFPRTLAILAAAAALVVA) form the signal peptide. Cys20 is lipidated: N-palmitoyl cysteine. A lipid anchor (S-diacylglycerol cysteine) is attached at Cys20. Residues Asp123, Arg131, Arg193, and 223–224 (KH) each bind substrate. Catalysis depends on His236, which acts as the Proton donor/acceptor. Asp311 serves as the catalytic Nucleophile.

It belongs to the glycosyl hydrolase 3 family.

The protein resides in the cell inner membrane. The enzyme catalyses Hydrolysis of terminal non-reducing N-acetyl-D-hexosamine residues in N-acetyl-beta-D-hexosaminides.. It functions in the pathway cell wall biogenesis; peptidoglycan recycling. Plays a role in peptidoglycan recycling by cleaving the terminal beta-1,4-linked N-acetylglucosamine (GlcNAc) from peptidoglycan fragments. Acts as a regulator for GlcNAc-MurNAc levels by cleaving disaccharides and allowing the breakdown of MurNAc. In Mycobacterium bovis (strain BCG / Pasteur 1173P2), this protein is Beta-hexosaminidase LpqI.